The following is a 195-amino-acid chain: 3-hydroxyanthranilate 3,4-dioxygenase (195 aa).

O2 is bound at residue Arg-50. 3 residues coordinate Fe cation: His-54, Glu-60, and His-102. Position 60 (Glu-60) interacts with substrate. The substrate site is built by Arg-106 and Glu-116. A divalent metal cation-binding residues include Cys-131, Cys-136, Cys-170, and Cys-173.

Belongs to the 3-HAO family. Requires Fe(2+) as cofactor.

It is found in the cytoplasm. It carries out the reaction 3-hydroxyanthranilate + O2 = (2Z,4Z)-2-amino-3-carboxymuconate 6-semialdehyde. It participates in cofactor biosynthesis; NAD(+) biosynthesis; quinolinate from L-kynurenine: step 3/3. Its function is as follows. Catalyzes the oxidative ring opening of 3-hydroxyanthranilate to 2-amino-3-carboxymuconate semialdehyde, which spontaneously cyclizes to quinolinate. This Aspergillus terreus (strain NIH 2624 / FGSC A1156) protein is 3-hydroxyanthranilate 3,4-dioxygenase (bna1).